The chain runs to 1893 residues: MGPGCDLLLRTAATITAAAIMSDTDSDEDSAGGGPFSLAGFLFGNINGAGQLEGESVLDDECKKHLAGLGALGLGSLITELTANEELTGTDGALVNDEGWVRSTEDAVDYSDINEVAEDESRRYQQTMGSLQPLCHSDYDEDDYDADCEDIDCKLMPPPPPPPGPMKKDKDQDSITGVSENGEGIILPSIIAPSSLASEKVDFSSSSDSESEMGPQEATQAESEDGKLTLPLAGIMQHDATKLLPSVTELFPEFRPGKVLRFLRLFGPGKNVPSVWRSARRKRKKKHRELIQEEQIQEVECSVESEVSQKSLWNYDYAPPPPPEQCLSDDEITMMAPVESKFSQSTGDIDKVTDTKPRVAEWRYGPARLWYDMLGVPEDGSGFDYGFKLRKTEHEPVIKSRMIEEFRKLEENNGTDLLADENFLMVTQLHWEDDIIWDGEDVKHKGTKPQRASLAGWLPSSMTRNAMAYNVQQGFAATLDDDKPWYSIFPIDNEDLVYGRWEDNIIWDAQAMPRLLEPPVLTLDPNDENLILEIPDEKEEATSNSPSKESKKESSLKKSRILLGKTGVIKEEPQQNMSQPEVKDPWNLSNDEYYYPKQQGLRGTFGGNIIQHSIPAVELRQPFFPTHMGPIKLRQFHRPPLKKYSFGALSQPGPHSVQPLLKHIKKKAKMREQERQASGGGEMFFMRTPQDLTGKDGDLILAEYSEENGPLMMQVGMATKIKNYYKRKPGKDPGAPDCKYGETVYCHTSPFLGSLHPGQLLQAFENNLFRAPIYLHKMPETDFLIIRTRQGYYIRELVDIFVVGQQCPLFEVPGPNSKRANTHIRDFLQVFIYRLFWKSKDRPRRIRMEDIKKAFPSHSESSIRKRLKLCADFKRTGMDSNWWVLKSDFRLPTEEEIRAMVSPEQCCAYYSMIAAEQRLKDAGYGEKSFFAPEEENEEDFQMKIDDEVRTAPWNTTRAFIAAMKGKCLLEVTGVADPTGCGEGFSYVKIPNKPTQQKDDKEPQPVKKTVTGTDADLRRLSLKNAKQLLRKFGVPEEEIKKLSRWEVIDVVRTMSTEQARSGEGPMSKFARGSRFSVAEHQERYKEECQRIFDLQNKVLSSTEVLSTDTDSSSAEDSDFEEMGKNIENMLQNKKTSSQLSREREEQERKELQRMLLAAGSAASGNNHRDDDTASVTSLNSSATGRCLKIYRTFRDEEGKEYVRCETVRKPAVIDAYVRIRTTKDEEFIRKFALFDEQHREEMRKERRRIQEQLRRLKRNQEKEKLKGPPEKKPKKMKERPDLKLKCGACGAIGHMRTNKFCPLYYQTNAPPSNPVAMTEEQEEELEKTVIHNDNEELIKVEGTKIVLGKQLIESADEVRRKSLVLKFPKQQLPPKKKRRVGTTVHCDYLNRPHKSIHRRRTDPMVTLSSILESIINDMRDLPNTYPFHTPVNAKVVKDYYKIITRPMDLQTLRENVRKRLYPSREEFREHLELIVKNSATYNGPKHSLTQISQSMLDLCDEKLKEKEDKLARLEKAINPLLDDDDQVAFSFILDNIVTQKMMAVPDSWPFHHPVNKKFVPDYYKVIVNPMDLETIRKNISKHKYQSRESFLDDVNLILANSVKYNGPESQYTKTAQEIVNVCYQTLTEYDEHLTQLEKDICTAKEAALEEAELESLDPMTPGPYTPQPPDLYDTNTSLSMSRDASVFQDESNMSVLDIPSATPEKQVTQEGEDGDGDLADEEEGTVQQPQASVLYEDLLMSEGEDDEEDAGSDEEGDNPFSAIQLSESGSDSDVGSGGIRPKQPRMLQENTRMDMENEESMMSYEGDGGEASHGLEDSNISYGSYEEPDPKSNTQDTSFSSIGGYEVSEEEEDEEEEEQRSGPSVLSQVHLSEDEEDSEDFHSIAGDSDLDSDE.

A Protein kinase 1 domain is found at 1–435 (MGPGCDLLLR…VTQLHWEDDI (435 aa)). Ser-137 carries the phosphoserine; by autocatalysis modification. Disordered stretches follow at residues 155 to 184 (LMPP…NGEG) and 197 to 224 (ASEK…AESE). Over residues 156 to 165 (MPPPPPPPGP) the composition is skewed to pro residues. The segment covering 197–208 (ASEKVDFSSSSD) has biased composition (low complexity). Ser-328 is modified (phosphoserine; by autocatalysis). Residues 534–557 (IPDEKEEATSNSPSKESKKESSLK) form a disordered region. The histone acetyltransferase (HAT) stretch occupies residues 538–997 (KEEATSNSPS…KIPNKPTQQK (460 aa)). Lys-565 is subject to N6-acetyllysine. Glycyl lysine isopeptide (Lys-Gly) (interchain with G-Cter in SUMO2) cross-links involve residues Lys-570 and Lys-583. 4 disordered regions span residues 990-1009 (PNKP…KKTV), 1128-1148 (MLQN…QERK), 1158-1177 (GSAA…VTSL), and 1254-1278 (RLKR…MKER). 2 stretches are compositionally biased toward basic and acidic residues: residues 995–1004 (QQKDDKEPQP) and 1139–1148 (SREREEQERK). The segment at residues 1216-1294 (VRIRTTKDEE…CGACGAIGHM (79 aa)) is a DNA-binding region (HMG box; involved in promoter binding). A compositionally biased stretch (basic and acidic residues) spans 1254-1270 (RLKRNQEKEKLKGPPEK). Positions 1363–1650 (VLKFPKQQLP…TAKEAALEEA (288 aa)) are interaction with ASF1A and ASF1B. Residues 1372–1379 (PPKKKRRV) carry the Nuclear localization signal motif. 2 consecutive Bromo domains span residues 1397 to 1505 (RRRT…LKEK) and 1519 to 1628 (LLDD…LTEY). The 448-residue stretch at 1446 to 1893 (MDLQTLRENV…AGDSDLDSDE (448 aa)) folds into the Protein kinase 2 domain. The segment at 1651 to 1676 (ELESLDPMTPGPYTPQPPDLYDTNTS) is disordered. The span at 1659 to 1668 (TPGPYTPQPP) shows a compositional bias: pro residues. Residues Ser-1690, Ser-1693, Ala-1718, Glu-1721, and Gly-1723 each carry the phosphoserine modification. Positions 1696-1893 (DIPSATPEKQ…AGDSDLDSDE (198 aa)) are disordered. Composition is skewed to acidic residues over residues 1709-1723 (EGED…EEEG) and 1741-1756 (EGED…EEGD). Phosphoserine occurs at positions 1799, 1802, and 1820. A compositionally biased stretch (polar residues) spans 1830–1840 (KSNTQDTSFSS). The segment covering 1846–1857 (VSEEEEDEEEEE) has biased composition (acidic residues). Ser-1847 bears the Phosphoserine mark. The segment covering 1860 to 1869 (SGPSVLSQVH) has biased composition (polar residues).

The protein belongs to the TAF1 family. In terms of assembly, component of the TFIID basal transcription factor complex, composed of TATA-box-binding protein TBP, and a number of TBP-associated factors (TAFs), including TAF1, TAF2, TAF3, TAF4, TAF5, TAF6, TAF7, TAF8, TAF9, TAF10, TAF11, TAF12 and TAF13. Interacts with TAF7; the interaction is direct. TAF1, when part of the TFIID complex, interacts with C-terminus of TP53. Part of a TFIID-containing RNA polymerase II pre-initiation complex that is composed of TBP and at least GTF2A1, GTF2A2, GTF2E1, GTF2E2, GTF2F1, GTF2H2, GTF2H3, GTF2H4, GTF2H5, GTF2B, TCEA1, ERCC2, ERCC3, TAF1, TAF2, TAF3, TAF4, TAF5, TAF6, TAF7, TAF8, TAF9, TAF10, TAF11, TAF12 and TAF13. Component of some MLL1/MLL complex, at least composed of the core components KMT2A/MLL1, ASH2L, HCFC1/HCF1, WDR5 and RBBP5, as well as the facultative components BACC1, CHD8, E2F6, HSP70, INO80C, KANSL1, LAS1L, MAX, MCRS1, MGA, KAT8/MOF, PELP1, PHF20, PRP31, RING2, RUVB1/TIP49A, RUVB2/TIP49B, SENP3, TAF1, TAF4, TAF6, TAF7, TAF9 and TEX10. RB1 interacts with the N-terminal domain of TAF1. Interacts with ASF1A and ASF1B. Interacts (via bromo domains) with acetylated lysine residues on the N-terminus of histone H1.4, H2A, H2B, H3 and H4 (in vitro). As to quaternary structure, (Microbial infection) Interacts with SV40 Large T antigen. (Microbial infection) Interacts with herpes simplex virus 1 ICP4. The cofactor is Mg(2+). Phosphorylated by casein kinase II in vitro.

It localises to the nucleus. It catalyses the reaction L-seryl-[protein] + ATP = O-phospho-L-seryl-[protein] + ADP + H(+). The enzyme catalyses L-threonyl-[protein] + ATP = O-phospho-L-threonyl-[protein] + ADP + H(+). It carries out the reaction L-lysyl-[protein] + acetyl-CoA = N(6)-acetyl-L-lysyl-[protein] + CoA + H(+). Its activity is regulated as follows. Autophosphorylates on Ser residues. Inhibited by retinoblastoma tumor suppressor protein, RB1. Binding to TAF7 or CIITA inhibits the histone acetyltransferase activity. Functionally, the TFIID basal transcription factor complex plays a major role in the initiation of RNA polymerase II (Pol II)-dependent transcription. TFIID recognizes and binds promoters with or without a TATA box via its subunit TBP, a TATA-box-binding protein, and promotes assembly of the pre-initiation complex (PIC). The TFIID complex consists of TBP and TBP-associated factors (TAFs), including TAF1, TAF2, TAF3, TAF4, TAF5, TAF6, TAF7, TAF8, TAF9, TAF10, TAF11, TAF12 and TAF13. TAF1 is the largest component and core scaffold of the TFIID complex, involved in nucleating complex assembly. TAF1 forms a promoter DNA binding subcomplex of TFIID, together with TAF7 and TAF2. Contains novel N- and C-terminal Ser/Thr kinase domains which can autophosphorylate or transphosphorylate other transcription factors. Phosphorylates TP53 on 'Thr-55' which leads to MDM2-mediated degradation of TP53. Phosphorylates GTF2A1 and GTF2F1 on Ser residues. Possesses DNA-binding activity. Essential for progression of the G1 phase of the cell cycle. Exhibits histone acetyltransferase activity towards histones H3 and H4. The protein is Transcription initiation factor TFIID subunit 1 of Homo sapiens (Human).